Here is a 184-residue protein sequence, read N- to C-terminus: Glutathione-regulated potassium-efflux system ancillary protein KefG (184 aa).

Belongs to the NAD(P)H dehydrogenase (quinone) family. KefG subfamily. In terms of assembly, interacts with KefB.

Its subcellular location is the cell inner membrane. The enzyme catalyses a quinone + NADH + H(+) = a quinol + NAD(+). The catalysed reaction is a quinone + NADPH + H(+) = a quinol + NADP(+). In terms of biological role, regulatory subunit of a potassium efflux system that confers protection against electrophiles. Required for full activity of KefB. This Yersinia enterocolitica serotype O:8 / biotype 1B (strain NCTC 13174 / 8081) protein is Glutathione-regulated potassium-efflux system ancillary protein KefG.